Reading from the N-terminus, the 204-residue chain is Probable chorismate pyruvate-lyase (204 aa).

Positions 75, 113, and 160 each coordinate substrate.

Belongs to the UbiC family.

Its subcellular location is the cytoplasm. It carries out the reaction chorismate = 4-hydroxybenzoate + pyruvate. It functions in the pathway cofactor biosynthesis; ubiquinone biosynthesis. Removes the pyruvyl group from chorismate, with concomitant aromatization of the ring, to provide 4-hydroxybenzoate (4HB) for the ubiquinone pathway. The sequence is that of Probable chorismate pyruvate-lyase from Alcanivorax borkumensis (strain ATCC 700651 / DSM 11573 / NCIMB 13689 / SK2).